We begin with the raw amino-acid sequence, 605 residues long: DNA primase (605 aa).

A CHC2-type zinc finger spans residues 38-62 (CPFHDEKTPSFTVSEDKQICHCFGC). Residues 260 to 341 (DEIVLLEGFM…NVFVIQLPSG (82 aa)) enclose the Toprim domain. Residues E266, D310, and D312 each coordinate Mg(2+).

The protein belongs to the DnaG primase family. Monomer. Interacts with DnaB. Zn(2+) is required as a cofactor. Mg(2+) serves as cofactor.

It catalyses the reaction ssDNA + n NTP = ssDNA/pppN(pN)n-1 hybrid + (n-1) diphosphate.. RNA polymerase that catalyzes the synthesis of short RNA molecules used as primers for DNA polymerase during DNA replication. This Staphylococcus aureus protein is DNA primase.